A 95-amino-acid chain; its full sequence is MISVQVIFIAFISIIAFSMVCGGNVFPNRELGILYGCKGYGNAFCDKVCKMHLARGGGRCGEPNPVMWACECIDIDEDNGYFLNALEKQCPLLKG.

A signal peptide spans 1-22 (MISVQVIFIAFISIIAFSMVCG). The 69-residue stretch at 23-91 (GNVFPNRELG…FLNALEKQCP (69 aa)) folds into the LCN-type CS-alpha/beta domain. Cystine bridges form between Cys37/Cys60, Cys45/Cys70, and Cys49/Cys72.

As to quaternary structure, homodimer; disulfide-linked or monomer (edited version) or heterodimer of an alpha chain (AC P84810) and this beta chain (non-edited version). Expressed by the venom gland.

Its subcellular location is the secreted. Its function is as follows. The homodimer inhibits HMG-CoA reductase (HMGCR) (32% of inhibition produced by 0.6 uM), a glycoprotein involved in the control of cholesterol biosynthesis. The inhibitory effects of bumarsin are seen at much lower concentrations (0.6 uM) than that for statins such as atorvastatin (5 mM) and simvastatin (10 uM). In addition to inhibition of HMG-CoA reductase, this protein lowers cholesterol levels by inducing steroid hormone synthesis via StAR, and by increasing reverse cholesterol transport mediated by the induction of ABCA1 and APOA1. In terms of biological role, the heterodimer non-edited LVP1 induces lipolysis in rat adipocytes. Induction of lipolysis by LVP1 appears to be mediated through the beta-2 adrenergic receptor pathway (ADRB2). Intracerebroventricular injection is not toxic to mice. Functionally, the monomer edited version, similar to alpha-toxins, may modulate voltage-gated sodium channels (Nav) and may block voltage-gated potassium channels (Kv). The polypeptide is Lipolysis-activating peptide 1-beta chain (Buthus occitanus tunetanus (Common European scorpion)).